A 364-amino-acid chain; its full sequence is mRNA decay activator protein ZFP36L2-B (364 aa).

Basic and acidic residues predominate over residues 102–111 (SFSENGERSQ). The disordered stretch occupies residues 102-129 (SFSENGERSQHLLHLQQQQQQQKAGAQV). Residues 113–123 (LLHLQQQQQQQ) are compositionally biased toward low complexity. The RNA-binding motif lies at 133-138 (RYKTEL). 2 C3H1-type zinc fingers span residues 133-161 (RYKTELCRPFEENGACKYGEKCQFAHGFH) and 171-199 (KYKTELCRTFHTIGFCPYGPRCHFIHNAE). Residues 150–191 (YGEKCQFAHGFHELRSLTRHPKYKTELCRTFHTIGFCPYGPR) are RNA-binding. Residues 308 to 350 (SESPVFDAPPSPPDSLSDRDSYLSGSLSSGSLSGSDSPTLDSN) are disordered. The segment covering 329-348 (YLSGSLSSGSLSGSDSPTLD) has biased composition (low complexity).

Post-translationally, phosphorylated. As to expression, remains unlocalized in the egg and early embryo. From stage 21 (late neurula), expressed around the pronephros in the anterior crests, pharyngeal arch, hindbrain, mesodermal tissues around the pronephros and tail-bud. This expression pattern is maintained up to the tadpole stage.

The protein localises to the nucleus. Its subcellular location is the cytoplasm. Functionally, zinc-finger RNA-binding protein that destabilizes several cytoplasmic AU-rich element (ARE)-containing mRNA transcripts by promoting their poly(A) tail removal or deadenylation, and hence provide a mechanism for attenuating protein synthesis. Acts as a 3'-untranslated region (UTR) ARE mRNA-binding adapter protein to communicate signaling events to the mRNA decay machinery. Functions by recruiting the CCR4-NOT deadenylase complex and probably other components of the cytoplasmic RNA decay machinery to the bound ARE-containing mRNAs, and hence promotes ARE-mediated mRNA deadenylation and decay processes. Binds to 3'-UTR ARE of numerous mRNAs. Also induces the degradation of ARE-containing mRNAs even in absence of poly(A) tail. Required for tubulogenesis during pronephros development. This is mRNA decay activator protein ZFP36L2-B (zfp36l2-B) from Xenopus laevis (African clawed frog).